Consider the following 306-residue polypeptide: uncharacterized protein (306 aa).

A disordered region spans residues 40 to 156 (HETCSTPGED…AVASASAPTE (117 aa)). Residues 64-73 (EGINLGEEGL) are compositionally biased toward low complexity. The segment covering 129 to 139 (KQHKKAKKRKS) has biased composition (basic residues).

This is an uncharacterized protein from Rattus norvegicus (Rat).